The chain runs to 123 residues: Large ribosomal subunit protein uL14 (123 aa).

This sequence belongs to the universal ribosomal protein uL14 family. As to quaternary structure, part of the 50S ribosomal subunit. Forms a cluster with proteins L3 and L19. In the 70S ribosome, L14 and L19 interact and together make contacts with the 16S rRNA in bridges B5 and B8.

Binds to 23S rRNA. Forms part of two intersubunit bridges in the 70S ribosome. The chain is Large ribosomal subunit protein uL14 from Cronobacter sakazakii (strain ATCC BAA-894) (Enterobacter sakazakii).